We begin with the raw amino-acid sequence, 559 residues long: MTKFVFVTGGVVSSLGKGIASASLAAILESRGLKVTLIKLDPYINVDPGTMSPFQHGEVFVTDDGAETDLDLGHYERFITTRMRKANNFTTGQIYKTVLEKERRGDYLGKTVQVIPHITNEIQEYIKRGAGLGTAHEVDVAIVEIGGTVGDIESLPFLEAVRQMSLRMGPNNSAFVHLSYVPWIAAAGELKTKPTQHTAKELRAIGIQADALLCRADRPIPDDERAKISLFSNVPEWGVISMWDVDTIYKVPRMLHEQGLDGLICDKLRINTPPAKLQRWDELVYEVEHPQQEVSIAMVGKYVDLSDSYKSLNEALRHAGMKNHARVKIDYIDSETISPQDVSRLAKYDAILVPGGFGQRGVEGKISAARFAREGKVPYLGICLGMQVATIEYARHVAGLKNANSTEFDPETPCPVIALITEWKDADGTVKTRNEKSDLGGTMRLGAQSSDVSAGTLAHSIYGDVVTERHRHRYEANVNYLDELRAAGLVISALTQREHLTEIVELPQDVHPWFMGVQFHPEFKSTPWSGHPLFNAFIKAALDHKARSAGGAKNLKAVA.

An amidoligase domain region spans residues 1-270 (MTKFVFVTGG…DGLICDKLRI (270 aa)). Position 13 (serine 13) interacts with CTP. UTP is bound at residue serine 13. ATP contacts are provided by residues 14–19 (SLGKGI) and aspartate 71. Residues aspartate 71 and glutamate 144 each contribute to the Mg(2+) site. Residues 151 to 153 (DIE), 191 to 196 (KTKPTQ), and lysine 227 contribute to the CTP site. UTP is bound by residues 191-196 (KTKPTQ) and lysine 227. Residues 295–547 (SIAMVGKYVD…IKAALDHKAR (253 aa)) enclose the Glutamine amidotransferase type-1 domain. Glycine 356 contributes to the L-glutamine binding site. The active-site Nucleophile; for glutamine hydrolysis is cysteine 383. L-glutamine-binding positions include 384–387 (LGMQ), glutamate 407, and arginine 473. Catalysis depends on residues histidine 520 and glutamate 522.

It belongs to the CTP synthase family. In terms of assembly, homotetramer.

It carries out the reaction UTP + L-glutamine + ATP + H2O = CTP + L-glutamate + ADP + phosphate + 2 H(+). It catalyses the reaction L-glutamine + H2O = L-glutamate + NH4(+). The enzyme catalyses UTP + NH4(+) + ATP = CTP + ADP + phosphate + 2 H(+). It functions in the pathway pyrimidine metabolism; CTP biosynthesis via de novo pathway; CTP from UDP: step 2/2. Its activity is regulated as follows. Allosterically activated by GTP, when glutamine is the substrate; GTP has no effect on the reaction when ammonia is the substrate. The allosteric effector GTP functions by stabilizing the protein conformation that binds the tetrahedral intermediate(s) formed during glutamine hydrolysis. Inhibited by the product CTP, via allosteric rather than competitive inhibition. Functionally, catalyzes the ATP-dependent amination of UTP to CTP with either L-glutamine or ammonia as the source of nitrogen. Regulates intracellular CTP levels through interactions with the four ribonucleotide triphosphates. In Variovorax paradoxus (strain S110), this protein is CTP synthase.